The chain runs to 336 residues: Foldase protein PrsA (336 aa).

The N-terminal stretch at 1–22 (MKSAKKLLSVLCLGIFILTFTA) is a signal peptide. Residue cysteine 23 is the site of N-palmitoyl cysteine attachment. The S-diacylglycerol cysteine moiety is linked to residue cysteine 23. Positions 194-286 (PNTMNVSHIL…FGYHIIKINS (93 aa)) constitute a PpiC domain.

It belongs to the PrsA family.

It is found in the cell membrane. It catalyses the reaction [protein]-peptidylproline (omega=180) = [protein]-peptidylproline (omega=0). Functionally, plays a major role in protein secretion by helping the post-translocational extracellular folding of several secreted proteins. The polypeptide is Foldase protein PrsA (Clostridium botulinum (strain Okra / Type B1)).